Reading from the N-terminus, the 798-residue chain is Cold shock domain-containing protein E1 (798 aa).

Residue M1 is modified to N-acetylmethionine. The CSD 1 domain maps to 26–87 (ETGVIEKLLT…RTGKPIAVKL (62 aa)). An N6-acetyllysine modification is found at K81. Residue K91 forms a Glycyl lysine isopeptide (Lys-Gly) (interchain with G-Cter in SUMO2) linkage. S123 is subject to Phosphoserine. The region spanning 136-179 (VFYLTYTPEDVEGNVQLETGDKINFVIDNNKHTGAVSARNIMLL) is the CSD 2; truncated domain. The CSD 3 domain maps to 186-245 (CQGVVCAMKEAFGFIERGDVVKEIFFHYSEFKGDLETLQPGDDVEFTIKDRNGKEVATDV). Residue S276 is modified to Phosphoserine. Residues 297-337 (LPFGDKDTKSKVTLLEGDHVRFNISTDRRDKLERATNIEVL) enclose the CSD 4; truncated domain. CSD domains are found at residues 349 to 410 (EMGV…AIRI) and 447 to 507 (NKGK…ATCV). S514 carries the phosphoserine modification. The CSD 7 domain maps to 519–579 (LLGYVATLKD…KGNKVSAEKV (61 aa)). S584 is modified (phosphoserine). CSD domains follow at residues 610-670 (PTQT…AYNI) and 674-735 (RRAT…ACNV). Positions 748–789 (PRPDRLVNRLKNITLDDASAPRLMVLRQPRGPDNSMGFGAER) constitute an SUZ-C domain. Position 761 is a phosphothreonine (T761).

Belongs to the UNR family. In terms of assembly, component of a multi subunit autoregulatory ribonucleoprotein complex (ARC), at least composed of IGF2BP1, PABPC1 and CSDE1. Interacts with STRAP. Part of a complex associated with the FOS mCRD domain and consisting of PABPC1, PAIP1, HNRPD and SYNCRIP. The interaction with PABPC1 is direct and RNA-independent. Interacts with EIF4ENIF1/4E-T.

It localises to the cytoplasm. It is found in the stress granule. Its subcellular location is the P-body. Functionally, RNA-binding protein involved in translationally coupled mRNA turnover. Implicated with other RNA-binding proteins in the cytoplasmic deadenylation/translational and decay interplay of the FOS mRNA mediated by the major coding-region determinant of instability (mCRD) domain. Required for efficient formation of stress granules. In terms of biological role, (Microbial infection) Required for internal initiation of translation of human rhinovirus RNA. The protein is Cold shock domain-containing protein E1 of Homo sapiens (Human).